The primary structure comprises 296 residues: Cytidine deaminase (296 aa).

CMP/dCMP-type deaminase domains lie at 47–167 (TEAE…FGPK) and 186–296 (DSSD…VDPV). Residue 88–90 (NLE) participates in substrate binding. H101 provides a ligand contact to Zn(2+). E103 functions as the Proton donor in the catalytic mechanism. 2 residues coordinate Zn(2+): C128 and C131.

This sequence belongs to the cytidine and deoxycytidylate deaminase family. In terms of assembly, homodimer. It depends on Zn(2+) as a cofactor.

It catalyses the reaction cytidine + H2O + H(+) = uridine + NH4(+). The catalysed reaction is 2'-deoxycytidine + H2O + H(+) = 2'-deoxyuridine + NH4(+). Its function is as follows. This enzyme scavenges exogenous and endogenous cytidine and 2'-deoxycytidine for UMP synthesis. The chain is Cytidine deaminase from Shewanella sp. (strain MR-7).